Reading from the N-terminus, the 89-residue chain is MPRSTKKGPFFDHHLIKKVESAAGSKRPIKTCSRRSVILPQMVGHTIAIHNGKNYHPVVINENMVGHKLGEFSITRVFKGHGGDKKSGK.

Belongs to the universal ribosomal protein uS19 family.

Its function is as follows. Protein S19 forms a complex with S13 that binds strongly to the 16S ribosomal RNA. This chain is Small ribosomal subunit protein uS19, found in Xylella fastidiosa (strain M12).